The sequence spans 73 residues: Heterin-2 (73 aa).

The signal sequence occupies residues 1-22 (MQYKTFLVIFLAYLLVTEEALA). Residues 47 to 73 (KRALKNIFDPYQKNLDLELERLLSQLQ) constitute a propeptide that is removed on maturation.

The protein belongs to the non-disulfide-bridged peptide (NDBP) superfamily. Medium-length antimicrobial peptide (group 3) family. In terms of tissue distribution, expressed by the venom gland.

Its subcellular location is the secreted. It localises to the target cell membrane. Amphipathic peptide with potent activities against Gram-positive bacteria (MIC=5.6-30.0 uM) and weaker activities against the tested Gram-negative bacteria (MIC=15 uM to &gt;45 uM). It has high hemolytic activity against human erythrocytes. May act by disrupting the integrity of the bacterial cell membrane. This is Heterin-2 from Heterometrus spinifer (Asia giant forest scorpion).